A 449-amino-acid chain; its full sequence is C4-dicarboxylate transport protein (449 aa).

9 helical membrane passes run 5-25 (AVFK…VSLG), 45-65 (LIKM…IAGM), 77-97 (LAVL…LIVV), 149-169 (GDML…HSFG), 185-205 (VLFG…FGAM), 231-251 (CVIF…FSII), 298-318 (GYSF…VFIA), 332-352 (TLLV…GSGF), and 353-373 (IVLA…LALI).

It belongs to the dicarboxylate/amino acid:cation symporter (DAACS) (TC 2.A.23) family.

It localises to the cell inner membrane. Its function is as follows. Responsible for the transport of dicarboxylates such as succinate, fumarate, and malate from the periplasm across the membrane. The chain is C4-dicarboxylate transport protein from Dechloromonas aromatica (strain RCB).